The following is a 568-amino-acid chain: Proline--tRNA ligase (568 aa).

Belongs to the class-II aminoacyl-tRNA synthetase family. ProS type 1 subfamily. Homodimer.

The protein resides in the cytoplasm. The enzyme catalyses tRNA(Pro) + L-proline + ATP = L-prolyl-tRNA(Pro) + AMP + diphosphate. In terms of biological role, catalyzes the attachment of proline to tRNA(Pro) in a two-step reaction: proline is first activated by ATP to form Pro-AMP and then transferred to the acceptor end of tRNA(Pro). As ProRS can inadvertently accommodate and process non-cognate amino acids such as alanine and cysteine, to avoid such errors it has two additional distinct editing activities against alanine. One activity is designated as 'pretransfer' editing and involves the tRNA(Pro)-independent hydrolysis of activated Ala-AMP. The other activity is designated 'posttransfer' editing and involves deacylation of mischarged Ala-tRNA(Pro). The misacylated Cys-tRNA(Pro) is not edited by ProRS. This chain is Proline--tRNA ligase, found in Nitrosomonas eutropha (strain DSM 101675 / C91 / Nm57).